Reading from the N-terminus, the 161-residue chain is Type IV major fimbrial protein FimA (161 aa).

A propeptide spans 1–7 (MKSLQKG) (leader sequence). Phe-8 is subject to N-methylphenylalanine. A helical membrane pass occupies residues 8–28 (FTLIELMIVVAIIGILAAFAI). A disulfide bridge links Cys-63 with Cys-105.

Belongs to the N-Me-Phe pilin family. As to quaternary structure, the pili are polar flexible filaments of about 5.4 nanometers diameter and 2.5 micrometers average length; they consist of only a single polypeptide chain arranged in a helical configuration of five subunits per turn in the assembled pilus.

It is found in the fimbrium. Its subcellular location is the membrane. Functionally, major component of the type IV fimbriae that plays an essential role in twitching motility, natural transformation, and protease secretion. The polypeptide is Type IV major fimbrial protein FimA (fimA) (Dichelobacter nodosus (Bacteroides nodosus)).